The following is a 637-amino-acid chain: Biosynthetic arginine decarboxylase (637 aa).

Position 101 is an N6-(pyridoxal phosphate)lysine (K101). Substrate is bound at residue 286–296; sequence FDVGGGLAVDY.

This sequence belongs to the Orn/Lys/Arg decarboxylase class-II family. SpeA subfamily. Requires Mg(2+) as cofactor. It depends on pyridoxal 5'-phosphate as a cofactor.

It catalyses the reaction L-arginine + H(+) = agmatine + CO2. Its pathway is amine and polyamine biosynthesis; agmatine biosynthesis; agmatine from L-arginine: step 1/1. Catalyzes the biosynthesis of agmatine from arginine. This is Biosynthetic arginine decarboxylase from Shewanella baltica (strain OS195).